A 448-amino-acid chain; its full sequence is Cysteine--tRNA ligase (448 aa).

Cys29 serves as a coordination point for Zn(2+). The 'HIGH' region motif lies at 31–41 (PTVYDTAHIGN). Over residues 79 to 91 (ATTGADRGADQAH) the composition is skewed to basic and acidic residues. The tract at residues 79–106 (ATTGADRGADQAHRGPLPRRHGPLNAAP) is disordered. The Zn(2+) site is built by Cys206 and Glu235. A 'KMSKS' region motif is present at residues 265–269 (RMSKS). ATP is bound at residue Lys268.

This sequence belongs to the class-I aminoacyl-tRNA synthetase family. In terms of assembly, monomer. Zn(2+) serves as cofactor.

The protein localises to the cytoplasm. The enzyme catalyses tRNA(Cys) + L-cysteine + ATP = L-cysteinyl-tRNA(Cys) + AMP + diphosphate. The protein is Cysteine--tRNA ligase (cysS) of Azospirillum brasilense.